Consider the following 457-residue polypeptide: Tubulin alpha chain (457 aa).

The GTP site is built by Q12, E77, S146, G150, T151, T186, N213, and N235. E77 provides a ligand contact to Mg(2+).

The protein belongs to the tubulin family. Dimer of alpha and beta chains. A typical microtubule is a hollow water-filled tube with an outer diameter of 25 nm and an inner diameter of 15 nM. Alpha-beta heterodimers associate head-to-tail to form protofilaments running lengthwise along the microtubule wall with the beta-tubulin subunit facing the microtubule plus end conferring a structural polarity. Microtubules usually have 13 protofilaments but different protofilament numbers can be found in some organisms and specialized cells. Mg(2+) serves as cofactor. Undergoes a tyrosination/detyrosination cycle, the cyclic removal and re-addition of a C-terminal tyrosine residue by the enzymes tubulin tyrosine carboxypeptidase (TTCP) and tubulin tyrosine ligase (TTL), respectively.

It is found in the cytoplasm. It localises to the cytoskeleton. The catalysed reaction is GTP + H2O = GDP + phosphate + H(+). Functionally, tubulin is the major constituent of microtubules, a cylinder consisting of laterally associated linear protofilaments composed of alpha- and beta-tubulin heterodimers. Microtubules grow by the addition of GTP-tubulin dimers to the microtubule end, where a stabilizing cap forms. Below the cap, tubulin dimers are in GDP-bound state, owing to GTPase activity of alpha-tubulin. This is Tubulin alpha chain (tubA) from Dictyostelium discoideum (Social amoeba).